Reading from the N-terminus, the 510-residue chain is Gallate 1-beta-glucosyltransferase (510 aa).

His-19 acts as the Proton acceptor in catalysis. His-19 contributes to the an anthocyanidin binding site. Gln-343, His-358, Trp-361, Asn-362, Ser-363, and Glu-366 together coordinate UDP-alpha-D-glucose. An an anthocyanidin-binding site is contributed by Gly-381. UDP-alpha-D-glucose is bound by residues Asp-382 and Gln-383.

The protein belongs to the UDP-glycosyltransferase family. As to expression, expressed in swelling buds and young leaves.

It catalyses the reaction 3,4,5-trihydroxybenzoate + UDP-alpha-D-glucose = 1-O-galloyl-beta-D-glucose + UDP. The enzyme catalyses vanillate + UDP-alpha-D-glucose = 1-O-(4-hydroxy-3-methoxybenzoyl)-beta-D-glucose + UDP. The catalysed reaction is 3,4-dihydroxybenzoate + UDP-alpha-D-glucose = 1-O-(3,4-dihydroxy-benzoyl)-beta-D-glucose + UDP. Its function is as follows. Glucosyltransferase that catalyzes the formation of 1-O-beta-D-glucose esters with hydroxybenzoic acids as preferred glucosyl acceptors. Has the highest activity with 3,4-dihydroxybenzoate, vanillate and gallate in vitro. Gallate is the predicted native substrate of the enzyme, which thus catalyzes the formation of 1-O-galloyl-beta-D-glucose, the first committed step of gallotannin biosynthesis. In Quercus robur (English oak), this protein is Gallate 1-beta-glucosyltransferase.